A 484-amino-acid polypeptide reads, in one-letter code: tRNA sulfurtransferase (484 aa).

The region spanning 56–158 (NCLKKALSKV…GNRAYFYTEV (103 aa)) is the THUMP domain. Residues 176–177 (LV), Lys-257, Gly-279, and Gln-288 contribute to the ATP site. A disulfide bond links Cys-336 and Cys-444. The region spanning 396-479 (APEGAVIVDL…TRNAVPPSSQ (84 aa)) is the Rhodanese domain. Catalysis depends on Cys-444, which acts as the Cysteine persulfide intermediate.

This sequence belongs to the ThiI family.

Its subcellular location is the cytoplasm. The catalysed reaction is [ThiI sulfur-carrier protein]-S-sulfanyl-L-cysteine + a uridine in tRNA + 2 reduced [2Fe-2S]-[ferredoxin] + ATP + H(+) = [ThiI sulfur-carrier protein]-L-cysteine + a 4-thiouridine in tRNA + 2 oxidized [2Fe-2S]-[ferredoxin] + AMP + diphosphate. The enzyme catalyses [ThiS sulfur-carrier protein]-C-terminal Gly-Gly-AMP + S-sulfanyl-L-cysteinyl-[cysteine desulfurase] + AH2 = [ThiS sulfur-carrier protein]-C-terminal-Gly-aminoethanethioate + L-cysteinyl-[cysteine desulfurase] + A + AMP + 2 H(+). It functions in the pathway cofactor biosynthesis; thiamine diphosphate biosynthesis. Functionally, catalyzes the ATP-dependent transfer of a sulfur to tRNA to produce 4-thiouridine in position 8 of tRNAs, which functions as a near-UV photosensor. Also catalyzes the transfer of sulfur to the sulfur carrier protein ThiS, forming ThiS-thiocarboxylate. This is a step in the synthesis of thiazole, in the thiamine biosynthesis pathway. The sulfur is donated as persulfide by IscS. This Pyrobaculum aerophilum (strain ATCC 51768 / DSM 7523 / JCM 9630 / CIP 104966 / NBRC 100827 / IM2) protein is tRNA sulfurtransferase.